The primary structure comprises 380 residues: Cytochrome b (380 aa).

A run of 4 helical transmembrane segments spans residues 34–54 (FGSL…LLAM), 78–99 (WLIR…YLHI), 114–134 (WNTG…GYVL), and 179–199 (FFAL…IHLT). Residues H84 and H98 each contribute to the heme b site. 2 residues coordinate heme b: H183 and H197. Residue H202 participates in a ubiquinone binding. The next 4 helical transmembrane spans lie at 227-247 (TKDL…AMFS), 289-309 (LGGV…PFLH), 321-341 (LSQL…WVGS), and 348-368 (FIII…ILFP).

This sequence belongs to the cytochrome b family. In terms of assembly, the cytochrome bc1 complex contains 11 subunits: 3 respiratory subunits (MT-CYB, CYC1 and UQCRFS1), 2 core proteins (UQCRC1 and UQCRC2) and 6 low-molecular weight proteins (UQCRH/QCR6, UQCRB/QCR7, UQCRQ/QCR8, UQCR10/QCR9, UQCR11/QCR10 and a cleavage product of UQCRFS1). This cytochrome bc1 complex then forms a dimer. Requires heme b as cofactor.

It is found in the mitochondrion inner membrane. Its function is as follows. Component of the ubiquinol-cytochrome c reductase complex (complex III or cytochrome b-c1 complex) that is part of the mitochondrial respiratory chain. The b-c1 complex mediates electron transfer from ubiquinol to cytochrome c. Contributes to the generation of a proton gradient across the mitochondrial membrane that is then used for ATP synthesis. The sequence is that of Cytochrome b (MT-CYB) from Amazilia tzacatl (Rufous-tailed hummingbird).